Reading from the N-terminus, the 276-residue chain is MMSDEQHQGGDGQTTTNTNTVAYRAQPVVPMDIFTFQNLRMQPGYAPNSTKQINLYYWWGDHETTCPDYTQVTTAWVVGWVKSSKIRAMKMPEGSTDEPTYSLDLDIRDGTGQLKIIQLKTTLGANGRQSNYDENGGVLQRNSPFKENQYYSFVLKPALQRQAPQQQEQLTTIQGYLVSYHEIVNHNEITTHLSDFVKAYHRMQSNFRYFIHKVIRAYSVNDIAVSLDVIQSHLKDIMSEEQNTSQQLVDYLQYLVSEKQILTQTDSGYMFIKEQQ.

The interval 1-20 (MMSDEQHQGGDGQTTTNTNT) is disordered.

This is an uncharacterized protein from Dictyostelium discoideum (Social amoeba).